Reading from the N-terminus, the 127-residue chain is Large ribosomal subunit protein bL17 (127 aa).

It belongs to the bacterial ribosomal protein bL17 family. As to quaternary structure, part of the 50S ribosomal subunit. Contacts protein L32.

The chain is Large ribosomal subunit protein bL17 from Escherichia fergusonii (strain ATCC 35469 / DSM 13698 / CCUG 18766 / IAM 14443 / JCM 21226 / LMG 7866 / NBRC 102419 / NCTC 12128 / CDC 0568-73).